Here is a 1169-residue protein sequence, read N- to C-terminus: Chromosome partition protein Smc (1169 aa).

32–39 (PNGSGKSN) contributes to the ATP binding site. Positions 166–507 (DEISGIAEFD…RIKALKEMEE (342 aa)) form a coiled coil. The SMC hinge domain occupies 523 to 636 (PGIIDIVGNL…ENIDIAKELA (114 aa)). Residues 676–1030 (SKLNKIADEI…NKKKEVFMEV (355 aa)) adopt a coiled-coil conformation.

The protein belongs to the SMC family. In terms of assembly, homodimer.

It localises to the cytoplasm. Functionally, required for chromosome condensation and partitioning. The sequence is that of Chromosome partition protein Smc from Methanocaldococcus jannaschii (strain ATCC 43067 / DSM 2661 / JAL-1 / JCM 10045 / NBRC 100440) (Methanococcus jannaschii).